The following is a 252-amino-acid chain: UPF0246 protein FP0718 (252 aa).

The protein belongs to the UPF0246 family.

In Flavobacterium psychrophilum (strain ATCC 49511 / DSM 21280 / CIP 103535 / JIP02/86), this protein is UPF0246 protein FP0718.